The following is a 282-amino-acid chain: UDP-N-acetylenolpyruvoylglucosamine reductase (282 aa).

In terms of domain architecture, FAD-binding PCMH-type spans 15-179; that stretch reads IKSFAKYVYF…LSAEFEFEYK (165 aa). The active site involves arginine 157. The active-site Proton donor is serine 207. Glutamate 278 is an active-site residue.

This sequence belongs to the MurB family. FAD is required as a cofactor.

It is found in the cytoplasm. It carries out the reaction UDP-N-acetyl-alpha-D-muramate + NADP(+) = UDP-N-acetyl-3-O-(1-carboxyvinyl)-alpha-D-glucosamine + NADPH + H(+). It functions in the pathway cell wall biogenesis; peptidoglycan biosynthesis. Functionally, cell wall formation. This is UDP-N-acetylenolpyruvoylglucosamine reductase from Francisella tularensis subsp. tularensis (strain SCHU S4 / Schu 4).